Reading from the N-terminus, the 1349-residue chain is DNA-directed RNA polymerase subunit beta' (1349 aa).

Positions 70, 72, 85, and 88 each coordinate Zn(2+). Residues Asp-460, Asp-462, and Asp-464 each contribute to the Mg(2+) site. Residues Cys-801, Cys-875, Cys-882, and Cys-885 each coordinate Zn(2+).

This sequence belongs to the RNA polymerase beta' chain family. The RNAP catalytic core consists of 2 alpha, 1 beta, 1 beta' and 1 omega subunit. When a sigma factor is associated with the core the holoenzyme is formed, which can initiate transcription. Requires Mg(2+) as cofactor. It depends on Zn(2+) as a cofactor.

The catalysed reaction is RNA(n) + a ribonucleoside 5'-triphosphate = RNA(n+1) + diphosphate. DNA-dependent RNA polymerase catalyzes the transcription of DNA into RNA using the four ribonucleoside triphosphates as substrates. The protein is DNA-directed RNA polymerase subunit beta' of Desulfotalea psychrophila (strain LSv54 / DSM 12343).